We begin with the raw amino-acid sequence, 309 residues long: Olfactory receptor 1A1 (309 aa).

The Extracellular segment spans residues 1–25 (MRENNQSSTLEFILLGVTGQQEQED). N5 is a glycosylation site (N-linked (GlcNAc...) asparagine). The chain crosses the membrane as a helical span at residues 26 to 49 (FFYILFLFIYPITLIGNLLIVLAI). Over 50 to 57 (CSDVHLHN) the chain is Cytoplasmic. The chain crosses the membrane as a helical span at residues 58-79 (PMYFLLANLSLVDIFFSSVTIP). At 80 to 100 (KMLANHLLGSKSISFGGCLTQ) the chain is on the extracellular side. The cysteines at positions 97 and 189 are disulfide-linked. Residues 101–120 (MYFMIALGNTDSYILAAMAY) form a helical membrane-spanning segment. The Cytoplasmic segment spans residues 121–139 (DRAVAISRPLHYTTIMSPR). The chain crosses the membrane as a helical span at residues 140 to 158 (SCIWLIAGSWVIGNANALP). The Extracellular portion of the chain corresponds to 159 to 195 (HTLLTASLSFCGNQEVANFYCDITPLLKLSCSDIHFH). The chain crosses the membrane as a helical span at residues 196–218 (VKMMYLGVGIFSVPLLCIIVSYI). Residues 219 to 235 (RVFSTVFQVPSTKGVLK) are Cytoplasmic-facing. The chain crosses the membrane as a helical span at residues 236-258 (AFSTCGSHLTVVSLYYGTVMGMY). At 259–270 (FRPLTNYSLKDA) the chain is on the extracellular side. N264 carries an N-linked (GlcNAc...) asparagine glycan. The chain crosses the membrane as a helical span at residues 271–290 (VITVMYTAVTPMLNPFIYSL). At 291–309 (RNRDVKAALRKLFNKRISS) the chain is on the cytoplasmic side.

The protein belongs to the G-protein coupled receptor 1 family.

The protein resides in the cell membrane. Odorant receptor. The chain is Olfactory receptor 1A1 (OR1A1) from Pan troglodytes (Chimpanzee).